A 170-amino-acid polypeptide reads, in one-letter code: 4-hydroxyphenylacetate 3-monooxygenase reductase component (170 aa).

This sequence belongs to the non-flavoprotein flavin reductase family. HpaC subfamily. Homodimer. 4-HPA 3-monooxygenase consists of a reductase component HpaC and an oxygenase component HpaB.

It carries out the reaction a reduced flavin + NAD(+) = an oxidized flavin + NADH + 2 H(+). It functions in the pathway aromatic compound metabolism; 4-hydroxyphenylacetate degradation; pyruvate and succinate semialdehyde from 4-hydroxyphenylacetate: step 1/7. Functionally, catalyzes the reduction of free flavins (FMN, FAD and riboflavin) by NADH. Subsequently, the reduced flavins diffuse to the large HpaB component or to other electron acceptors such as cytochrome c and Fe(3+) ion. The protein is 4-hydroxyphenylacetate 3-monooxygenase reductase component (hpaC) of Salmonella typhimurium (strain LT2 / SGSC1412 / ATCC 700720).